A 204-amino-acid polypeptide reads, in one-letter code: Large ribosomal subunit protein uL4 (204 aa).

The interval 47 to 69 (KAQKNRAAVSGGGKKPWRQKGTG) is disordered.

It belongs to the universal ribosomal protein uL4 family. Part of the 50S ribosomal subunit.

One of the primary rRNA binding proteins, this protein initially binds near the 5'-end of the 23S rRNA. It is important during the early stages of 50S assembly. It makes multiple contacts with different domains of the 23S rRNA in the assembled 50S subunit and ribosome. Its function is as follows. Forms part of the polypeptide exit tunnel. This Teredinibacter turnerae (strain ATCC 39867 / T7901) protein is Large ribosomal subunit protein uL4.